Reading from the N-terminus, the 522-residue chain is Target of rapamycin complex 2 subunit MAPKAP1 (522 aa).

N-acetylalanine is present on A2. The segment at A2–H184 is interaction with MAP3K2. Positions A2–K267 are interaction with NBN. A disordered region spans residues L38 to G59. At T86 the chain carries Phosphothreonine. Residues S128, S186, S315, and S356 each carry the phosphoserine modification. In terms of domain architecture, CRIM spans Q139 to K267. Positions L279–R353 are SIN1-type RBD. The region spanning H382–E487 is the SIN1-type PH domain. R393 is an a 1,2-diacyl-sn-glycero-3-phospho-(1D-myo-inositol-3,4,5-trisphosphate) binding site. At T398 the chain carries Phosphothreonine. A 1,2-diacyl-sn-glycero-3-phospho-(1D-myo-inositol-3,4,5-trisphosphate)-binding residues include K428 and K464. Residues F468–Q522 are interaction with ATF2. S510 is subject to Phosphoserine.

This sequence belongs to the SIN1 family. Component of the mechanistic target of rapamycin complex 2 (mTORC2), consisting in two heterotretramers composed of MTOR, MLST8, RICTOR and MAPKAP1/SIN1. The mTORC2 core complex associates with PRR5/PROTOR1 and/or PRR5L/PROTOR2. Contrary to mTORC1, mTORC2 does not bind to and is not sensitive to FKBP12-rapamycin. Interacts with MAP3K2. Interacts with ATF2. Interacts with MAPK8. Interacts with GTP-bound HRAS and KRAS; inhibiting their activity. Interacts with IFNAR2. In terms of processing, phosphorylation at Ser-128 by PKC promotes relocalization to the perinuclear region, where the mTORC2 complex specifically mediates phosphorylation of SGK1. Phosphorylated at Thr-86 by AKT1 or RPS6KB1 in the presence of growth factors; the effect of this phosphorylation is however unclear. According to two studies, phosphorylation at Thr-86 by AKT1 is part of a positive feedback loop that increases mTORC2 activation. According to another study, phosphorylation at Thr-86 and Thr-398 by RPS6KB1 promotes dissociation from the mTORC2 complex, leading to inhibit mTORC2 signaling.

The protein resides in the cell membrane. Its subcellular location is the endoplasmic reticulum membrane. The protein localises to the early endosome membrane. It localises to the late endosome membrane. It is found in the lysosome membrane. The protein resides in the golgi apparatus membrane. Its subcellular location is the mitochondrion outer membrane. The protein localises to the cytoplasm. It localises to the perinuclear region. It is found in the nucleus. With respect to regulation, phosphatidylinositol 3,4,5-trisphosphate (PI(3,4,5)P3) promotes MTOR activation by relieving MAPKAP1/SIN1-mediated inhibition of MTOR that takes place in absence of PI(3,4,5)P3. Component of the mechanistic target of rapamycin complex 2 (mTORC2), which transduces signals from growth factors to pathways involved in proliferation, cytoskeletal organization, lipogenesis and anabolic output. In response to growth factors, mTORC2 phosphorylates and activates AGC protein kinase family members, including AKT (AKT1, AKT2 and AKT3), PKC (PRKCA, PRKCB and PRKCE) and SGK1. In contrast to mTORC1, mTORC2 is nutrient-insensitive. Within the mTORC2 complex, MAPKAP1/SIN1 acts as a substrate adapter which recognizes and binds AGC protein kinase family members for phosphorylation by MTOR. mTORC2 plays a critical role in AKT1 activation by mediating phosphorylation of different sites depending on the context, such as 'Thr-450', 'Ser-473', 'Ser-477' or 'Thr-479', facilitating the phosphorylation of the activation loop of AKT1 on 'Thr-308' by PDPK1/PDK1 which is a prerequisite for full activation. mTORC2 catalyzes the phosphorylation of SGK1 at 'Ser-422' and of PRKCA on 'Ser-657'. The mTORC2 complex also phosphorylates various proteins involved in insulin signaling, such as FBXW8 and IGF2BP1. mTORC2 acts upstream of Rho GTPases to regulate the actin cytoskeleton, probably by activating one or more Rho-type guanine nucleotide exchange factors. mTORC2 promotes the serum-induced formation of stress-fibers or F-actin. MAPKAP1 inhibits MAP3K2 by preventing its dimerization and autophosphorylation. Inhibits HRAS and KRAS independently of mTORC2 complex. Enhances osmotic stress-induced phosphorylation of ATF2 and ATF2-mediated transcription. Involved in ciliogenesis, regulates cilia length through its interaction with CCDC28B independently of mTORC2 complex. In Rattus norvegicus (Rat), this protein is Target of rapamycin complex 2 subunit MAPKAP1.